A 929-amino-acid chain; its full sequence is Protocadherin gamma-B7 (929 aa).

The signal sequence occupies residues 1–30; sequence MGGSCAQRRRAGPRQVLFPLLLPLFYPTLC. 6 consecutive Cadherin domains span residues 31–133, 134–242, 243–347, 348–452, 453–562, and 570–675; these read EPIR…APQF, RKDE…PPVF, SQDV…SPEI, IITS…APVF, GQSA…APRV, and DGSA…LPDF. Topologically, residues 31–691 are extracellular; it reads EPIRYSIPEE…SDSQAEMQFY (661 aa). Residues asparagine 419 and asparagine 545 are each glycosylated (N-linked (GlcNAc...) asparagine). The chain crosses the membrane as a helical span at residues 692–712; sequence LVVALALISVLFLLAVILAIA. Residues 713–929 lie on the Cytoplasmic side of the membrane; sequence LRLRQSFSPT…KKKSGKKEKK (217 aa). 2 disordered regions span residues 806–838 and 899–929; these read QAPP…WPNN and ATLT…KEKK. Polar residues predominate over residues 807 to 838; the sequence is APPNTDWRFSQAQRPGTSGSQNGDDTGTWPNN. Residues 919–929 are compositionally biased toward basic residues; sequence NKKKSGKKEKK.

The protein resides in the cell membrane. In terms of biological role, potential calcium-dependent cell-adhesion protein. May be involved in the establishment and maintenance of specific neuronal connections in the brain. This Homo sapiens (Human) protein is Protocadherin gamma-B7 (PCDHGB7).